The primary structure comprises 384 residues: 8-amino-7-oxononanoate synthase (384 aa).

Substrate is bound at residue R21. 108-109 (GF) contacts pyridoxal 5'-phosphate. A substrate-binding site is contributed by H133. Pyridoxal 5'-phosphate contacts are provided by S179, H207, and T233. An N6-(pyridoxal phosphate)lysine modification is found at K236. T352 provides a ligand contact to substrate.

It belongs to the class-II pyridoxal-phosphate-dependent aminotransferase family. BioF subfamily. As to quaternary structure, homodimer. Pyridoxal 5'-phosphate serves as cofactor.

It carries out the reaction 6-carboxyhexanoyl-[ACP] + L-alanine + H(+) = (8S)-8-amino-7-oxononanoate + holo-[ACP] + CO2. The protein operates within cofactor biosynthesis; biotin biosynthesis. Its function is as follows. Catalyzes the decarboxylative condensation of pimeloyl-[acyl-carrier protein] and L-alanine to produce 8-amino-7-oxononanoate (AON), [acyl-carrier protein], and carbon dioxide. This is 8-amino-7-oxononanoate synthase from Enterobacter sp. (strain 638).